Consider the following 115-residue polypeptide: U3-lycotoxin-Ls1p (115 aa).

The signal sequence occupies residues M1 to A20. A propeptide spanning residues E21–R44 is cleaved from the precursor. 4 cysteine pairs are disulfide-bonded: C48–C63, C55–C72, C62–C87, and C74–C85.

Belongs to the neurotoxin 19 (CSTX) family. 01 subfamily. As to expression, expressed by the venom gland.

It is found in the secreted. The chain is U3-lycotoxin-Ls1p from Lycosa singoriensis (Wolf spider).